The chain runs to 353 residues: UDP-xylose transporter 2 (353 aa).

Transmembrane regions (helical) follow at residues 7 to 27 (FQLG…SIVI), 31 to 51 (ALIS…HLLV), 75 to 95 (VLGF…SLGF), 100 to 120 (FYQM…TIFF), 132 to 152 (LVIL…LNML), 154 to 174 (SVLS…TNTI), 194 to 214 (AITL…QNVF), 224 to 244 (FFIV…FLVI), 250 to 270 (VTYQ…GYLL), and 280 to 300 (ILGI…CTLE). Positions 308–353 (TSTQLPQMDENEKDPLVSAENGSGLISDNGVQKQDPVWNSNKDFQA) are disordered. Positions 327–353 (ENGSGLISDNGVQKQDPVWNSNKDFQA) are enriched in polar residues. Ser-334 carries the phosphoserine modification.

The protein belongs to the TPT transporter family. TPT (TC 2.A.7.9) subfamily. In terms of tissue distribution, ubiquitous.

Its subcellular location is the golgi apparatus membrane. In terms of biological role, nucleotide-sugar transporter that transports UDP-xylose and UMP in a strict counter-exchange mode. The polypeptide is UDP-xylose transporter 2 (Arabidopsis thaliana (Mouse-ear cress)).